The sequence spans 232 residues: Sensory rhodopsin III (232 aa).

A run of 7 helical transmembrane segments spans residues 5 to 25, 39 to 59, 73 to 93, 100 to 120, 125 to 145, 168 to 188, and 194 to 214; these read IVWY…FVWF, LPPI…LIAG, FADW…LAGV, LAVA…SMSG, IAFA…IKTF, VVTW…TGII, and NFLV…ILLV. An N6-(retinylidene)lysine modification is found at K205.

It belongs to the archaeal/bacterial/fungal opsin family. As to quaternary structure, interacts with HtrM. Post-translationally, the covalent binding of retinal to the apoprotein, bacterioopsin, generates bacteriorhodopsin.

The protein localises to the membrane. Functionally, sensory rhodopsin. Associates with an unusual transducer lacking a methyl-accepting transducer domain found in all other photosensory transducers. The chromophore is all-trans-retinal in the dark. The polypeptide is Sensory rhodopsin III (xop2) (Haloarcula marismortui (strain ATCC 43049 / DSM 3752 / JCM 8966 / VKM B-1809) (Halobacterium marismortui)).